The sequence spans 154 residues: Large ribosomal subunit protein bL17 (154 aa).

A disordered region spans residues 125 to 154 (AASQKSSKQDRAKRVQGSKKNVDAVAESAE).

This sequence belongs to the bacterial ribosomal protein bL17 family. In terms of assembly, part of the 50S ribosomal subunit. Contacts protein L32.

The chain is Large ribosomal subunit protein bL17 from Chlorobium chlorochromatii (strain CaD3).